The chain runs to 513 residues: Lysine--tRNA ligase (513 aa).

The Mg(2+) site is built by Glu-423 and Glu-430.

The protein belongs to the class-II aminoacyl-tRNA synthetase family. In terms of assembly, homodimer. The cofactor is Mg(2+).

The protein resides in the cytoplasm. It catalyses the reaction tRNA(Lys) + L-lysine + ATP = L-lysyl-tRNA(Lys) + AMP + diphosphate. The polypeptide is Lysine--tRNA ligase (Anaeromyxobacter dehalogenans (strain 2CP-1 / ATCC BAA-258)).